A 283-amino-acid polypeptide reads, in one-letter code: Short-chain dehydrogenase cctT (283 aa).

Residues 1-20 (MLKTVLITGCSHGGLGAAMA) form the signal peptide. Residues isoleucine 7, threonine 33, lysine 39, glutamate 55, and asparagine 83 each coordinate NADP(+). The N-linked (GlcNAc...) asparagine glycan is linked to asparagine 131. Serine 133 acts as the Proton donor in catalysis. Residues tyrosine 147, arginine 151, valine 180, and threonine 182 each contribute to the NADP(+) site. Tyrosine 147 acts as the Proton acceptor in catalysis.

Belongs to the short-chain dehydrogenases/reductases (SDR) family.

Its function is as follows. Short-chain dehydrogenase; part of the gene cluster that mediates the biosynthesis of the mycotoxin cyclochlorotine, a hepatotoxic and carcinogenic cyclic chlorinated pentapeptide. The function of cctT within the pathway, if any, remains undetermined. The NRPS cctN initially catalyzes the condensation of L-serine (Ser), Pro, L-2-aminobutyrate (2Abu), Ser, and beta-Phe in this order to produce isocyclotine. After the dichlorination of Pro2 catalyzed by cctP2 to produce isocyclochlorotine, the cctO-mediated transacylation of isocyclochlorotine can furnish cyclochlorotine. The subsequent hydroxylation of cyclochlorotine by cctR yields hydroxycyclochlorotine as the final product. CctP1 probably acts as a phenylalanine aminomutase and provides the uncommon building block beta-Phe. Furthermore, 2Abu can be synthesized from threonine by one of the threonine dehydratases and transaminases localized outside of the cluster. The functions of the remaining proteins encoded by the cluster, cctM and cctT, have not been identified yet. The protein is Short-chain dehydrogenase cctT of Talaromyces islandicus (Penicillium islandicum).